Consider the following 189-residue polypeptide: MSETELEKIKVRTAEHLENDKNNISWLKEDTQLTNAKHADEKPINAIVINSVSDFNITDGPAKENPNEKKLSESSTSLSSLEECQTTFSYLQTDTSVHHRDTDEECASLILACLFCQFWDCLLMLPGTCETVCTKMCCPSRRYHHTSDENHSRNDCSCNCDMDCSLFESCHETSECLELAMEISEICYR.

Residues 28-188 (KEDTQLTNAK…LAMEISEICY (161 aa)) enclose the MDFI domain.

The protein belongs to the MDFI family.

The chain is MyoD family inhibitor domain-containing protein 2 from Homo sapiens (Human).